Here is a 1347-residue protein sequence, read N- to C-terminus: Protocadherin-11 X-linked (1347 aa).

The first 23 residues, 1-23 (MDLLSGTYIFAVLLACVVFHSGA), serve as a signal peptide directing secretion. Residues 24–812 (QEKNYTIREE…VSSPTNDYVK (789 aa)) are Extracellular-facing. Cadherin domains follow at residues 26-139 (KNYT…APLF), 140-249 (PATV…HPVF), 250-355 (KETE…VPSI), 362-466 (NPVN…APVF), 467-570 (TQSF…SPVF), 571-673 (THNE…KPVF), and 677-795 (PSNY…APVT). N-linked (GlcNAc...) asparagine glycans are attached at residues Asn27, Asn48, and Asn54. Residue Asn344 is glycosylated (N-linked (GlcNAc...) asparagine). N-linked (GlcNAc...) asparagine glycosylation is present at Asn553. Residue Asn773 is glycosylated (N-linked (GlcNAc...) asparagine). A helical transmembrane segment spans residues 813-833 (ILVAAVAGTITVVVVIFITAV). Over 834–1347 (VRCRQAPHLK…DSPIMEEHPL (514 aa)) the chain is Cytoplasmic. Disordered stretches follow at residues 1057 to 1091 (LPEG…GYPQ), 1097 to 1116 (RATP…ESTF), and 1326 to 1347 (FTPR…EHPL).

It is found in the cell membrane. Functionally, potential calcium-dependent cell-adhesion protein. The polypeptide is Protocadherin-11 X-linked (PCDH11X) (Gorilla gorilla gorilla (Western lowland gorilla)).